The following is a 763-amino-acid chain: Phosphoglycerol transferase I (763 aa).

4 helical membrane passes run 1–21 (MSEL…AWKA), 26–46 (WWFA…ITLF), 77–97 (ILPG…LGWI), and 108–128 (FGYS…SPAF).

It belongs to the OpgB family.

It localises to the cell inner membrane. The enzyme catalyses a phosphatidylglycerol + a membrane-derived-oligosaccharide D-glucose = a 1,2-diacyl-sn-glycerol + a membrane-derived-oligosaccharide 6-(glycerophospho)-D-glucose.. It participates in glycan metabolism; osmoregulated periplasmic glucan (OPG) biosynthesis. Functionally, transfers a phosphoglycerol residue from phosphatidylglycerol to the membrane-bound nascent glucan backbones. The polypeptide is Phosphoglycerol transferase I (Escherichia coli O127:H6 (strain E2348/69 / EPEC)).